The following is a 627-amino-acid chain: DNA mismatch repair protein MutL (627 aa).

The disordered stretch occupies residues A376–A404.

This sequence belongs to the DNA mismatch repair MutL/HexB family.

This protein is involved in the repair of mismatches in DNA. It is required for dam-dependent methyl-directed DNA mismatch repair. May act as a 'molecular matchmaker', a protein that promotes the formation of a stable complex between two or more DNA-binding proteins in an ATP-dependent manner without itself being part of a final effector complex. The protein is DNA mismatch repair protein MutL of Aeromonas salmonicida (strain A449).